A 225-amino-acid chain; its full sequence is Urease accessory protein UreG (225 aa).

25 to 32 is a binding site for GTP; that stretch reads GPVGAGKT.

The protein belongs to the SIMIBI class G3E GTPase family. UreG subfamily. In terms of assembly, homodimer. UreD, UreF and UreG form a complex that acts as a GTP-hydrolysis-dependent molecular chaperone, activating the urease apoprotein by helping to assemble the nickel containing metallocenter of UreC. The UreE protein probably delivers the nickel.

Its subcellular location is the cytoplasm. Facilitates the functional incorporation of the urease nickel metallocenter. This process requires GTP hydrolysis, probably effectuated by UreG. This chain is Urease accessory protein UreG, found in Haemophilus influenzae (strain ATCC 51907 / DSM 11121 / KW20 / Rd).